We begin with the raw amino-acid sequence, 609 residues long: UvrABC system protein C (609 aa).

The 78-residue stretch at 15–92 folds into the GIY-YIG domain; that stretch reads TGSGVYQMQD…IKQFRPRYNV (78 aa). Residues 202–237 form the UVR domain; sequence DQVIIKLTERMEVASENLVFEEAAHYRDQIRQLRRL.

This sequence belongs to the UvrC family. In terms of assembly, interacts with UvrB in an incision complex.

It localises to the cytoplasm. Functionally, the UvrABC repair system catalyzes the recognition and processing of DNA lesions. UvrC both incises the 5' and 3' sides of the lesion. The N-terminal half is responsible for the 3' incision and the C-terminal half is responsible for the 5' incision. This chain is UvrABC system protein C, found in Coxiella burnetii (strain CbuG_Q212) (Coxiella burnetii (strain Q212)).